A 325-amino-acid polypeptide reads, in one-letter code: Putative ankyrin repeat protein RF_0011 (325 aa).

ANK repeat units lie at residues 63–94 (NGNTTLILAADAGLEEACLKLIPKMSDEAINM), 99–130 (RGQPALVKAMWRDLDSVCIELIPKMSKENINA), and 134–164 (CGRTLLMLAAKKGMTTVSKMFINLMPPEMII).

The protein is Putative ankyrin repeat protein RF_0011 of Rickettsia felis (strain ATCC VR-1525 / URRWXCal2) (Rickettsia azadi).